The primary structure comprises 239 residues: uncharacterized protein (239 aa).

Transmembrane regions (helical) follow at residues 125–144, 149–171, and 197–216; these read LAII…LILY, IFVL…FLFL, and SVLN…GILF.

Its subcellular location is the cell membrane. This is an uncharacterized protein from Aquifex aeolicus (strain VF5).